Here is a 237-residue protein sequence, read N- to C-terminus: E3 ubiquitin-protein ligase RNF166 (237 aa).

An RING-type zinc finger spans residues 33 to 73 (CPICLEVYHRPVAIGSCGHTFCGECLQPCLQVPSPLCPLCR). Zn(2+) contacts are provided by C98, C101, H113, and C117. A C2HC RNF-type zinc finger spans residues 98–117 (CRGCNKKVTLAKMRVHISSC). Positions 221 to 237 (DEEAAFQAALALSLSEN) constitute a UIM domain.

The protein localises to the cytoplasm. It catalyses the reaction S-ubiquitinyl-[E2 ubiquitin-conjugating enzyme]-L-cysteine + [acceptor protein]-L-lysine = [E2 ubiquitin-conjugating enzyme]-L-cysteine + N(6)-ubiquitinyl-[acceptor protein]-L-lysine.. The protein operates within protein modification; protein ubiquitination. In terms of biological role, E3 ubiquitin-protein ligase that promotes the ubiquitination of different substrates. In turn, participates in different biological processes including interferon production or autophagy. Plays a role in the activation of RNA virus-induced interferon-beta production by promoting the ubiquitination of TRAF3 and TRAF6. Also plays a role in the early recruitment of autophagy adapters to bacteria. Mediates 'Lys-29' and 'Lys-33'-linked ubiquitination of SQSTM1 leading to xenophagic targeting of bacteria and inhibition of their replication. In Homo sapiens (Human), this protein is E3 ubiquitin-protein ligase RNF166 (RNF166).